We begin with the raw amino-acid sequence, 101 residues long: Protein translation factor SUI1 homolog (101 aa).

Belongs to the SUI1 family.

This chain is Protein translation factor SUI1 homolog, found in Methanosphaera stadtmanae (strain ATCC 43021 / DSM 3091 / JCM 11832 / MCB-3).